A 225-amino-acid polypeptide reads, in one-letter code: Ribulose-phosphate 3-epimerase (225 aa).

Serine 10 is a substrate binding site. Histidine 35, aspartate 37, and histidine 68 together coordinate a divalent metal cation. Catalysis depends on aspartate 37, which acts as the Proton acceptor. Substrate-binding positions include histidine 68, 144–147, and 175–177; these read GFGG and DGG. Aspartate 175 provides a ligand contact to a divalent metal cation. Aspartate 175 functions as the Proton donor in the catalytic mechanism.

It belongs to the ribulose-phosphate 3-epimerase family. The cofactor is a divalent metal cation.

It catalyses the reaction D-ribulose 5-phosphate = D-xylulose 5-phosphate. Its pathway is carbohydrate degradation. Its function is as follows. Catalyzes the reversible epimerization of D-ribulose 5-phosphate to D-xylulose 5-phosphate. In Rhodospirillum rubrum, this protein is Ribulose-phosphate 3-epimerase.